A 335-amino-acid polypeptide reads, in one-letter code: Glycerol-3-phosphate dehydrogenase [NAD(P)+] (335 aa).

Ser12, Trp13, and Lys107 together coordinate NADPH. Residues Lys107, Gly138, and Ser140 each coordinate sn-glycerol 3-phosphate. Ala142 lines the NADPH pocket. Sn-glycerol 3-phosphate is bound by residues Lys193, Asp246, Ser256, Arg257, and Asn258. The active-site Proton acceptor is the Lys193. Arg257 contributes to the NADPH binding site. The NADPH site is built by Val281 and Glu283.

The protein belongs to the NAD-dependent glycerol-3-phosphate dehydrogenase family.

The protein localises to the cytoplasm. The enzyme catalyses sn-glycerol 3-phosphate + NAD(+) = dihydroxyacetone phosphate + NADH + H(+). It catalyses the reaction sn-glycerol 3-phosphate + NADP(+) = dihydroxyacetone phosphate + NADPH + H(+). It functions in the pathway membrane lipid metabolism; glycerophospholipid metabolism. Its function is as follows. Catalyzes the reduction of the glycolytic intermediate dihydroxyacetone phosphate (DHAP) to sn-glycerol 3-phosphate (G3P), the key precursor for phospholipid synthesis. In Geobacter sulfurreducens (strain ATCC 51573 / DSM 12127 / PCA), this protein is Glycerol-3-phosphate dehydrogenase [NAD(P)+].